A 906-amino-acid chain; its full sequence is Protein translocase subunit SecA (906 aa).

Residues Gln-89, 107–111 (GEGKT), and Asp-502 contribute to the ATP site. A disordered region spans residues 829–898 (EAPPEPELPP…ACPCGSGKKY (70 aa)). Basic and acidic residues predominate over residues 858–877 (WSDHQHDERNVPAAERDPAD). Zn(2+) contacts are provided by Cys-890, Cys-892, Cys-901, and His-902.

This sequence belongs to the SecA family. As to quaternary structure, monomer and homodimer. Part of the essential Sec protein translocation apparatus which comprises SecA, SecYEG and auxiliary proteins SecDF-YajC and YidC. Requires Zn(2+) as cofactor.

The protein localises to the cell inner membrane. It localises to the cytoplasm. It carries out the reaction ATP + H2O + cellular proteinSide 1 = ADP + phosphate + cellular proteinSide 2.. In terms of biological role, part of the Sec protein translocase complex. Interacts with the SecYEG preprotein conducting channel. Has a central role in coupling the hydrolysis of ATP to the transfer of proteins into and across the cell membrane, serving both as a receptor for the preprotein-SecB complex and as an ATP-driven molecular motor driving the stepwise translocation of polypeptide chains across the membrane. The sequence is that of Protein translocase subunit SecA from Brucella anthropi (strain ATCC 49188 / DSM 6882 / CCUG 24695 / JCM 21032 / LMG 3331 / NBRC 15819 / NCTC 12168 / Alc 37) (Ochrobactrum anthropi).